The sequence spans 645 residues: Macrolide export ATP-binding/permease protein MacB (645 aa).

In terms of domain architecture, ABC transporter spans 6–244; the sequence is IELEGIRRSY…SSIAVVPWQA (239 aa). 42–49 contacts ATP; that stretch reads GASGSGKS. Helical transmembrane passes span 274–294, 526–546, 574–594, and 596–616; these read ALTL…MAIG, IAAI…LITV, AVVL…VIGV, and AALL…GALM.

Belongs to the ABC transporter superfamily. Macrolide exporter (TC 3.A.1.122) family. In terms of assembly, homodimer.

Its subcellular location is the cell inner membrane. Non-canonical ABC transporter that contains transmembrane domains (TMD), which form a pore in the inner membrane, and an ATP-binding domain (NBD), which is responsible for energy generation. Confers resistance against macrolides. The polypeptide is Macrolide export ATP-binding/permease protein MacB (Nitrobacter winogradskyi (strain ATCC 25391 / DSM 10237 / CIP 104748 / NCIMB 11846 / Nb-255)).